The primary structure comprises 284 residues: Phosphatidylglycerol--prolipoprotein diacylglyceryl transferase (284 aa).

7 consecutive transmembrane segments (helical) span residues 21–41 (IEVH…FYMA), 62–82 (YFLW…ILIY), 106–126 (FVGI…IASY), 136–156 (LLIY…FGRI), 190–210 (PSQL…VMWA), 218–238 (GLLI…AEFY), and 252–272 (LSMG…ILLY). Residue R155 coordinates a 1,2-diacyl-sn-glycero-3-phospho-(1'-sn-glycerol).

This sequence belongs to the Lgt family.

It is found in the cell inner membrane. It carries out the reaction L-cysteinyl-[prolipoprotein] + a 1,2-diacyl-sn-glycero-3-phospho-(1'-sn-glycerol) = an S-1,2-diacyl-sn-glyceryl-L-cysteinyl-[prolipoprotein] + sn-glycerol 1-phosphate + H(+). It participates in protein modification; lipoprotein biosynthesis (diacylglyceryl transfer). In terms of biological role, catalyzes the transfer of the diacylglyceryl group from phosphatidylglycerol to the sulfhydryl group of the N-terminal cysteine of a prolipoprotein, the first step in the formation of mature lipoproteins. The polypeptide is Phosphatidylglycerol--prolipoprotein diacylglyceryl transferase (Helicobacter pylori (strain P12)).